Reading from the N-terminus, the 364-residue chain is UDP-N-acetylglucosamine--N-acetylmuramyl-(pentapeptide) pyrophosphoryl-undecaprenol N-acetylglucosamine transferase (364 aa).

UDP-N-acetyl-alpha-D-glucosamine is bound by residues 10–12 (TGG), Asn-124, Ser-195, Ile-250, and Gln-295.

Belongs to the glycosyltransferase 28 family. MurG subfamily.

The protein resides in the cell membrane. The catalysed reaction is Mur2Ac(oyl-L-Ala-gamma-D-Glu-L-Lys-D-Ala-D-Ala)-di-trans,octa-cis-undecaprenyl diphosphate + UDP-N-acetyl-alpha-D-glucosamine = beta-D-GlcNAc-(1-&gt;4)-Mur2Ac(oyl-L-Ala-gamma-D-Glu-L-Lys-D-Ala-D-Ala)-di-trans,octa-cis-undecaprenyl diphosphate + UDP + H(+). It participates in cell wall biogenesis; peptidoglycan biosynthesis. Functionally, cell wall formation. Catalyzes the transfer of a GlcNAc subunit on undecaprenyl-pyrophosphoryl-MurNAc-pentapeptide (lipid intermediate I) to form undecaprenyl-pyrophosphoryl-MurNAc-(pentapeptide)GlcNAc (lipid intermediate II). The protein is UDP-N-acetylglucosamine--N-acetylmuramyl-(pentapeptide) pyrophosphoryl-undecaprenol N-acetylglucosamine transferase of Levilactobacillus brevis (strain ATCC 367 / BCRC 12310 / CIP 105137 / JCM 1170 / LMG 11437 / NCIMB 947 / NCTC 947) (Lactobacillus brevis).